The primary structure comprises 475 residues: Protein EARLY HEADING DATE 2 (475 aa).

Residues 1–16 are compositionally biased toward polar residues; the sequence is MLLSDLSSDQEATGSN. Residues 1 to 26 are disordered; it reads MLLSDLSSDQEATGSNSHGGGGGDRM. C2H2-type zinc fingers lie at residues 105 to 127 and 155 to 185; these read FVCE…RRGH and YVCP…SRKH. 2 short sequence motifs (nuclear localization signal) span residues 123 to 130 and 177 to 184; these read HRRGHNLP and IKKHFSRK. A C2H2-type 2; degenerate zinc finger spans residues 190 to 213; sequence WRCERCGKRYAVHSDWKAHVKNCG. 8 residues coordinate Zn(2+): Cys192, Cys195, His208, Cys212, Cys219, Cys221, His234, and Cys238. The segment at 217–240 adopts a CCHC-type 2; atypical zinc-finger fold; the sequence is YRCDCGILFSRKDSLLTHRAFCDA. Positions 227-239 are SHR-binding; sequence RKDSLLTHRAFCD.

As to expression, mostly expressed in developing leaves (more in sheaths than in blades, especially in the outer epidermal cell of immature leaves and in the region immediately beneath the meristem where internodes are visible) and panicles, and, at very low levels, around the shoot apex and in roots.

It is found in the nucleus. Functionally, transcription activator that acts as a flowering master switch in both long and short days, independently of the circadian clock. Promotes flowering upstream of HD1 by up-regulating FTL1, FTL4, FTL5, FTL6, EHD1, HD3A and RFT1. Seems to repress FTL11 expression. May recognize the consensus motif 5'-TTTGTCGTAAT-3' in target gene promoters. This Oryza sativa subsp. japonica (Rice) protein is Protein EARLY HEADING DATE 2.